Reading from the N-terminus, the 272-residue chain is Probable ribonuclease HI_0526 (272 aa).

A signal peptide spans methionine 1 to threonine 23. Residues histidine 148, glutamate 195, and histidine 199 contribute to the active site.

Belongs to the RNase T2 family.

The chain is Probable ribonuclease HI_0526 from Haemophilus influenzae (strain ATCC 51907 / DSM 11121 / KW20 / Rd).